A 422-amino-acid polypeptide reads, in one-letter code: Beta-1,3-galactosyltransferase 2 (422 aa).

Over 1–24 (MLQWRRRHCCFAKMTWNAKRSLFR) the chain is Cytoplasmic. The chain crosses the membrane as a helical; Signal-anchor for type II membrane protein span at residues 25-45 (THLIGVLSLVFLFAMFLFFNH). At 46 to 422 (HDWLPGRAGF…AGRYRHRKLH (377 aa)) the chain is on the lumenal side. Asn75, Asn100, Asn119, Asn176, and Asn226 each carry an N-linked (GlcNAc...) asparagine glycan. Positions 90 to 110 (TLRPQTATNSNNTDLSPQGVT) are disordered.

Belongs to the glycosyltransferase 31 family. Mn(2+) is required as a cofactor.

The protein resides in the golgi apparatus membrane. It carries out the reaction an N-acetyl-beta-D-glucosaminyl derivative + UDP-alpha-D-galactose = a beta-D-galactosyl-(1-&gt;3)-N-acetyl-beta-D-glucosaminyl derivative + UDP + H(+). It catalyses the reaction a beta-D-GlcNAc-(1-&gt;3)-beta-D-Gal-(1-&gt;4)-beta-D-Glc-(1&lt;-&gt;1)-Cer(d18:1(4E)) + UDP-alpha-D-galactose = a beta-D-Gal-(1-&gt;3)-beta-D-GlcNAc-(1-&gt;3)-beta-D-Gal-(1-&gt;4)-beta-D-Glc-(1&lt;-&gt;1')-Cer(d18:1(4E)) + UDP + H(+). The catalysed reaction is a neolactoside IV(3)-beta-GlcNAc-nLc4Cer(d18:1(4E)) + UDP-alpha-D-galactose = a neolactoside IV(3)-beta-[Gal-beta-(1-&gt;3)-GlcNAc]-nLc4Cer(d18:1(4E)) + UDP + H(+). Its pathway is protein modification; protein glycosylation. In terms of biological role, beta-1,3-galactosyltransferase that transfers galactose from UDP-galactose to substrates with a terminal beta-N-acetylglucosamine (beta-GlcNAc) residue. Can also utilize substrates with a terminal galactose residue, albeit with lower efficiency. Involved in the biosynthesis of the carbohydrate moieties of glycolipids and glycoproteins. Inactive towards substrates with terminal alpha-N-acetylglucosamine (alpha-GlcNAc) or alpha-N-acetylgalactosamine (alpha-GalNAc) residues. This is Beta-1,3-galactosyltransferase 2 (B3GALT2) from Pongo abelii (Sumatran orangutan).